Consider the following 388-residue polypeptide: Cuticle-degrading protease (388 aa).

The first 18 residues, Met-1 to Ala-18, serve as a signal peptide directing secretion. A propeptide spanning residues Thr-19–Ser-107 is cleaved from the precursor. Residues Lys-41–Ile-106 form the Inhibitor I9 domain. The Peptidase S8 domain maps to Pro-116–Ala-388. 2 cysteine pairs are disulfide-bonded: Cys-143/Cys-233 and Cys-288/Cys-360. Residues Asp-148 and His-179 each act as charge relay system in the active site. Asn-296 carries an N-linked (GlcNAc...) asparagine glycan. The active-site Charge relay system is the Ser-334.

Belongs to the peptidase S8 family.

It localises to the secreted. In terms of biological role, capable of breaching the insect cuticle. The sequence is that of Cuticle-degrading protease (PR1) from Metarhizium anisopliae (Entomophthora anisopliae).